The primary structure comprises 310 residues: Oxygen-dependent coproporphyrinogen-III oxidase (310 aa).

Position 97 (S97) interacts with substrate. A divalent metal cation contacts are provided by H101 and H111. Catalysis depends on H111, which acts as the Proton donor. Substrate is bound at residue 113–115; that stretch reads NFR. H150 and H180 together coordinate a divalent metal cation. Residues 245-280 are important for dimerization; that stretch reads YVEFNLLYDRGTRFGLEFGGRTESILMSLPPRVVWR. A substrate-binding site is contributed by 263–265; sequence GGR.

Belongs to the aerobic coproporphyrinogen-III oxidase family. Homodimer. It depends on a divalent metal cation as a cofactor.

It localises to the cytoplasm. It catalyses the reaction coproporphyrinogen III + O2 + 2 H(+) = protoporphyrinogen IX + 2 CO2 + 2 H2O. It participates in porphyrin-containing compound metabolism; protoporphyrin-IX biosynthesis; protoporphyrinogen-IX from coproporphyrinogen-III (O2 route): step 1/1. Involved in the heme biosynthesis. Catalyzes the aerobic oxidative decarboxylation of propionate groups of rings A and B of coproporphyrinogen-III to yield the vinyl groups in protoporphyrinogen-IX. The protein is Oxygen-dependent coproporphyrinogen-III oxidase of Coxiella burnetii (strain Dugway 5J108-111).